The chain runs to 237 residues: ATP synthase subunit a (237 aa).

A run of 6 helical transmembrane segments spans residues 18–38 (STLW…VGTL), 77–97 (IFTL…PMAF), 103–123 (IAVT…LGFM), 132–152 (LFWV…IEVI), 185–205 (LILF…AIVA), and 209–229 (LEIL…CVYL).

This sequence belongs to the ATPase A chain family. F-type ATPases have 2 components, CF(1) - the catalytic core - and CF(0) - the membrane proton channel. CF(1) has five subunits: alpha(3), beta(3), gamma(1), delta(1), epsilon(1). CF(0) has three main subunits: a(1), b(2) and c(9-12). The alpha and beta chains form an alternating ring which encloses part of the gamma chain. CF(1) is attached to CF(0) by a central stalk formed by the gamma and epsilon chains, while a peripheral stalk is formed by the delta and b chains.

The protein localises to the cellular chromatophore membrane. Key component of the proton channel; it plays a direct role in the translocation of protons across the membrane. The chain is ATP synthase subunit a from Rhodobacter capsulatus (Rhodopseudomonas capsulata).